The primary structure comprises 27 residues: Cupiennin-3c (27 aa).

As to expression, expressed by the venom gland.

It is found in the secreted. The polypeptide is Cupiennin-3c (Cupiennius salei (American wandering spider)).